Consider the following 407-residue polypeptide: Peptidase T (407 aa).

His-82 lines the Zn(2+) pocket. Residue Asp-84 is part of the active site. Asp-143 is a binding site for Zn(2+). The active-site Proton acceptor is the Glu-177. Zn(2+) contacts are provided by Glu-178, Asp-200, and His-382.

It belongs to the peptidase M20B family. It depends on Zn(2+) as a cofactor.

Its subcellular location is the cytoplasm. The catalysed reaction is Release of the N-terminal residue from a tripeptide.. Functionally, cleaves the N-terminal amino acid of tripeptides. The sequence is that of Peptidase T from Streptococcus pyogenes serotype M3 (strain ATCC BAA-595 / MGAS315).